The sequence spans 233 residues: Germin-like protein (233 aa).

Positions 1–22 (MEAYKMFAFVVLLATTLYQAYA) are cleaved as a signal peptide. A disulfide bridge links Cys32 with Cys49. The Cupin type-1 domain maps to 63-215 (RGLNMPANTD…RPSISMRIWS (153 aa)). Mn(2+)-binding residues include His111, His113, Glu118, and His162.

Belongs to the germin family. As to quaternary structure, oligomer (believed to be a pentamer but probably hexamer). Expressed at high levels in unstressed roots.

The protein resides in the secreted. It is found in the extracellular space. The protein localises to the apoplast. Its function is as follows. May be involved in seed germination. The chain is Germin-like protein from Mesembryanthemum crystallinum (Common ice plant).